The primary structure comprises 175 residues: UPF0178 protein GOX1710 (175 aa).

Belongs to the UPF0178 family.

The chain is UPF0178 protein GOX1710 from Gluconobacter oxydans (strain 621H) (Gluconobacter suboxydans).